Consider the following 80-residue polypeptide: Putative membrane protein insertion efficiency factor (80 aa).

Belongs to the UPF0161 family.

It is found in the cell inner membrane. In terms of biological role, could be involved in insertion of integral membrane proteins into the membrane. This chain is Putative membrane protein insertion efficiency factor, found in Kosmotoga olearia (strain ATCC BAA-1733 / DSM 21960 / TBF 19.5.1).